The sequence spans 116 residues: PTS system cellobiose-specific EIIA component (116 aa).

The PTS EIIA type-3 domain occupies 11–109 (DDYMGVVMGI…AVEVVGQEQR (99 aa)). Catalysis depends on His85, which acts as the Tele-phosphohistidine intermediate. His85 carries the phosphohistidine; by HPr modification. Asp88 serves as a coordination point for Mg(2+).

As to quaternary structure, homotrimer. Mg(2+) serves as cofactor.

The phosphoenolpyruvate-dependent sugar phosphotransferase system (sugar PTS), a major carbohydrate active transport system, catalyzes the phosphorylation of incoming sugar substrates concomitantly with their translocation across the cell membrane. Involved in cellobiose transport with PtcB and CelB. This system can also transport lactose. This chain is PTS system cellobiose-specific EIIA component, found in Lactococcus lactis subsp. lactis (strain IL1403) (Streptococcus lactis).